A 340-amino-acid polypeptide reads, in one-letter code: Glycerol-3-phosphate dehydrogenase [NAD(P)+] (340 aa).

Ser11, Trp12, Arg33, and Lys106 together coordinate NADPH. 3 residues coordinate sn-glycerol 3-phosphate: Lys106, Gly137, and Ser139. Position 141 (Ala141) interacts with NADPH. Sn-glycerol 3-phosphate contacts are provided by Lys192, Asp245, Ser255, Arg256, and Asn257. The Proton acceptor role is filled by Lys192. Arg256 contributes to the NADPH binding site. NADPH-binding residues include Val280 and Glu282.

This sequence belongs to the NAD-dependent glycerol-3-phosphate dehydrogenase family.

It localises to the cytoplasm. It catalyses the reaction sn-glycerol 3-phosphate + NAD(+) = dihydroxyacetone phosphate + NADH + H(+). It carries out the reaction sn-glycerol 3-phosphate + NADP(+) = dihydroxyacetone phosphate + NADPH + H(+). It functions in the pathway membrane lipid metabolism; glycerophospholipid metabolism. In terms of biological role, catalyzes the reduction of the glycolytic intermediate dihydroxyacetone phosphate (DHAP) to sn-glycerol 3-phosphate (G3P), the key precursor for phospholipid synthesis. The sequence is that of Glycerol-3-phosphate dehydrogenase [NAD(P)+] from Bacillus cereus (strain G9842).